We begin with the raw amino-acid sequence, 556 residues long: Outer spore wall assembly protein SHE10 (556 aa).

The N-terminal stretch at 1–21 (MRFLTKFLLFLATVYFGLKYA) is a signal peptide. The stretch at 135–201 (NKNLKRHVER…KQITSDVKKT (67 aa)) forms a coiled coil. Basic and acidic residues predominate over residues 190–208 (EAKQITSDVKKTVESEIKK). Disordered regions lie at residues 190 to 263 (EAKQ…EDIT) and 534 to 556 (RKEA…PISA). Residues 220–244 (IVSTSTIVKTITRTRHSSSSTTSTK) are compositionally biased toward low complexity. Residues 245–256 (SAEETSEKNLET) are compositionally biased toward basic and acidic residues. Positions 481–547 (KISEFKLLLD…GEVNESSEEE (67 aa)) form a coiled coil.

This sequence belongs to the SHE10 family. As to quaternary structure, component of the mitochondria-localized RNase mitochondrial RNA-processing (RNase MRP) composed of one single RNA encoded by the NME1 gene and at least 31 proteins. Absent in the nucleus-localized RNase MRP (NuMRP).

The protein localises to the mitochondrion. In terms of biological role, involved in spore wall assembly. May be a component of the mitochondrial RNase MRP (MtMRP), a ribonucleoprotein endoribonuclease involved in the cleaving RNA transcripts to generate primers for DNA replication in mitochondria. The chain is Outer spore wall assembly protein SHE10 from Candida glabrata (strain ATCC 2001 / BCRC 20586 / JCM 3761 / NBRC 0622 / NRRL Y-65 / CBS 138) (Yeast).